The sequence spans 424 residues: Na(+), Li(+), K(+)/H(+) antiporter (424 aa).

12 consecutive transmembrane segments (helical) span residues 15–35 (VGEFFMNTSFWMVFPFLAIYF), 42–62 (GLAGMLLIISQIFSVAANLFG), 74–94 (MLVSAAVAQGFAFLLFALANS), 105–125 (VAFTLAGMCGSLYWPASQAMI), 141–161 (FYTTLNIAVVIGPLFGAVLFF), 165–185 (FELLLTVAIISVLLGLLLRFY), 227–247 (LLFVIAGILGAQTFMQLDLVI), 274–294 (TSFGILLAENGLIVALLTVVI), 305–325 (WVFFFSALLFGLSMAIFPMTS), 327–347 (FWIFFVAMAVFTFAELMVVGL), 367–389 (AASLRYTIGRMIAPISIPMTAWF), and 393–415 (WTFIILGSFAVLSGFVYLWMFHL).

It belongs to the major facilitator superfamily.

Its subcellular location is the cell membrane. With respect to regulation, norfloxacin transport is inhibited by CCCP. Functionally, exhibits dual functions as a Na(+)(Li(+)/K(+))/H(+) antiporter and a multidrug efflux pump. Catalyzes the efflux of Na(+), Li(+) and K(+) in exchange for external protons. Shows a preference for Na(+), followed by K(+) and Li(+). Can also function as a multidrug efflux pump. Transports ethidium bromide and norfloxacin. This is Na(+), Li(+), K(+)/H(+) antiporter from Planococcus maritimus.